Reading from the N-terminus, the 127-residue chain is Cytochrome c2 (127 aa).

A signal peptide spans 1–20; the sequence is MRKLVFGLFVLAASVAPAAA. A Pyrrolidone carboxylic acid modification is found at Gln-21. Positions 33, 36, 37, and 99 each coordinate heme c.

Belongs to the cytochrome c family. Binds 1 heme c group covalently per subunit.

In terms of biological role, cytochrome c2 is found mainly in purple, non-sulfur, photosynthetic bacteria where it functions as the electron donor to the oxidized bacteriochlorophyll in the photophosphorylation pathway. However, it may also have a role in the respiratory chain and is found in some non-photosynthetic bacteria. The polypeptide is Cytochrome c2 (cycA) (Blastochloris viridis (Rhodopseudomonas viridis)).